The sequence spans 201 residues: Elongation factor Ts (201 aa).

Residues 81 to 84 (TDFV) are involved in Mg(2+) ion dislocation from EF-Tu.

Belongs to the EF-Ts family.

The protein localises to the cytoplasm. In terms of biological role, associates with the EF-Tu.GDP complex and induces the exchange of GDP to GTP. It remains bound to the aminoacyl-tRNA.EF-Tu.GTP complex up to the GTP hydrolysis stage on the ribosome. In Syntrophus aciditrophicus (strain SB), this protein is Elongation factor Ts.